The following is a 436-amino-acid chain: ATP-dependent 6-phosphofructokinase (436 aa).

ATP-binding positions include G90, 155–156 (RG), and 180–183 (GDGT). D181 is a binding site for Mg(2+). Residues 209–211 (TID), 254–256 (MGR), E307, and 362–365 (YMIR) contribute to the substrate site. Catalysis depends on D211, which acts as the Proton acceptor.

This sequence belongs to the phosphofructokinase type A (PFKA) family. PPi-dependent PFK group II subfamily. Atypical ATP-dependent clade 'X' sub-subfamily. In terms of assembly, homodimer. Aggregates to a homotetramer after activation by ATP. The cofactor is Mg(2+).

It is found in the cytoplasm. The enzyme catalyses beta-D-fructose 6-phosphate + ATP = beta-D-fructose 1,6-bisphosphate + ADP + H(+). Its pathway is carbohydrate degradation; glycolysis; D-glyceraldehyde 3-phosphate and glycerone phosphate from D-glucose: step 3/4. With respect to regulation, activated by nucleoside triphosphates. Inhibited by phosphoenolpyruvate. EDTA and biphosphonates play the role of inhibitors of kinase activity. Its function is as follows. Catalyzes the phosphorylation of D-fructose 6-phosphate to fructose 1,6-bisphosphate by ATP, the first committing step of glycolysis. The sequence is that of ATP-dependent 6-phosphofructokinase (PPi-PFK) from Entamoeba histolytica (strain ATCC 30459 / HM-1:IMSS / ABRM).